Consider the following 280-residue polypeptide: GTP-binding protein rhoC (280 aa).

A disordered region spans residues 13 to 59; it reads TSRRHSLVTPPPSVAPRQNRMRSQSVRVSNGTVSTDNSMSSGRVSEA. Positions 33-59 are enriched in polar residues; the sequence is MRSQSVRVSNGTVSTDNSMSSGRVSEA. Residue 76–83 coordinates GTP; it reads GDGGCGKT. The Effector region signature appears at 98 to 106; the sequence is YVPTVFENY. Residues 125 to 129 and 183 to 186 contribute to the GTP site; these read DTAGQ and LKSD. Positions 251–275 are disordered; it reads WDTRLPSSSGKPGGKPIGGKKIKKR. Cysteine 277 bears the Cysteine methyl ester mark. The S-geranylgeranyl cysteine moiety is linked to residue cysteine 277. Residues 278 to 280 constitute a propeptide, removed in mature form; sequence KIL.

Belongs to the small GTPase superfamily. Rho family.

The protein resides in the cell membrane. The polypeptide is GTP-binding protein rhoC (rhoC) (Emericella nidulans (strain FGSC A4 / ATCC 38163 / CBS 112.46 / NRRL 194 / M139) (Aspergillus nidulans)).